A 227-amino-acid polypeptide reads, in one-letter code: MEQPVGQPAYVLHSRAYKETSALVDFFTPQGRMRAVLRRARGKGGSLVRPFVLLELELRGRGELKNVGRMDSSGIAAWLHGDALFSGLYLNELLMRLLPAEAPFPAIFEHYTLTLQALAEGRPLEPLLRSFEWRLLDELGYAFSLSQDVNDQPIAADGLYRLRVDAGLERVELLQPGLFRGIELLALAEADWDAPGALLAAKRLMRQALAVHLGAKPLVSRELFRKR.

Belongs to the RecO family.

Its function is as follows. Involved in DNA repair and RecF pathway recombination. In Pseudomonas putida (strain ATCC 700007 / DSM 6899 / JCM 31910 / BCRC 17059 / LMG 24140 / F1), this protein is DNA repair protein RecO.